The sequence spans 72 residues: Gas vesicle protein A (72 aa).

It belongs to the gas vesicle GvpA family. As to quaternary structure, the gas vesicle shell is 2 nm thick and consists of a single layer of this protein. It forms helical ribs nearly perpendicular to the long axis of the vesicle.

It localises to the gas vesicle shell. Functionally, gas vesicles are hollow, gas filled proteinaceous nanostructures found in some microorganisms. During planktonic growth they allow positioning of the organism at a favorable depth for light or nutrient acquisition. GvpA forms the protein shell. The chain is Gas vesicle protein A from Synechococcus sp. (strain JA-3-3Ab) (Cyanobacteria bacterium Yellowstone A-Prime).